The sequence spans 378 residues: Anhydro-N-acetylmuramic acid kinase (378 aa).

23-30 is an ATP binding site; that stretch reads GTSMDGAD.

It belongs to the anhydro-N-acetylmuramic acid kinase family.

It carries out the reaction 1,6-anhydro-N-acetyl-beta-muramate + ATP + H2O = N-acetyl-D-muramate 6-phosphate + ADP + H(+). The protein operates within amino-sugar metabolism; 1,6-anhydro-N-acetylmuramate degradation. Its pathway is cell wall biogenesis; peptidoglycan recycling. Its function is as follows. Catalyzes the specific phosphorylation of 1,6-anhydro-N-acetylmuramic acid (anhMurNAc) with the simultaneous cleavage of the 1,6-anhydro ring, generating MurNAc-6-P. Is required for the utilization of anhMurNAc either imported from the medium or derived from its own cell wall murein, and thus plays a role in cell wall recycling. This chain is Anhydro-N-acetylmuramic acid kinase, found in Bordetella pertussis (strain Tohama I / ATCC BAA-589 / NCTC 13251).